Here is a 596-residue protein sequence, read N- to C-terminus: A-type ATP synthase subunit A (596 aa).

241 to 248 (GPFGSGKT) is an ATP binding site.

It belongs to the ATPase alpha/beta chains family. In terms of assembly, has multiple subunits with at least A(3), B(3), C, D, E, F, H, I and proteolipid K(x).

It localises to the cell membrane. The enzyme catalyses ATP + H2O + 4 H(+)(in) = ADP + phosphate + 5 H(+)(out). Its function is as follows. Component of the A-type ATP synthase that produces ATP from ADP in the presence of a proton gradient across the membrane. The A chain is the catalytic subunit. The sequence is that of A-type ATP synthase subunit A from Ignicoccus hospitalis (strain KIN4/I / DSM 18386 / JCM 14125).